The chain runs to 272 residues: Shikimate dehydrogenase (NADP(+)) (272 aa).

Shikimate is bound by residues 14 to 16 (SKS) and threonine 61. The active-site Proton acceptor is lysine 65. Glutamate 77 contributes to the NADP(+) binding site. Positions 86 and 102 each coordinate shikimate. Residues 126-130 (GAGGA), 149-154 (NRTASR), and methionine 213 each bind NADP(+). Residue tyrosine 215 participates in shikimate binding. Glycine 237 contributes to the NADP(+) binding site.

It belongs to the shikimate dehydrogenase family. In terms of assembly, homodimer.

The enzyme catalyses shikimate + NADP(+) = 3-dehydroshikimate + NADPH + H(+). The protein operates within metabolic intermediate biosynthesis; chorismate biosynthesis; chorismate from D-erythrose 4-phosphate and phosphoenolpyruvate: step 4/7. In terms of biological role, involved in the biosynthesis of the chorismate, which leads to the biosynthesis of aromatic amino acids. Catalyzes the reversible NADPH linked reduction of 3-dehydroshikimate (DHSA) to yield shikimate (SA). The polypeptide is Shikimate dehydrogenase (NADP(+)) (Salmonella paratyphi A (strain ATCC 9150 / SARB42)).